A 155-amino-acid polypeptide reads, in one-letter code: Ribonuclease H (155 aa).

The RNase H type-1 domain occupies 4 to 145 (QQKVVEIYTD…ADALARKAIT (142 aa)). 4 residues coordinate Mg(2+): D13, E51, D73, and D137.

The protein belongs to the RNase H family. In terms of assembly, monomer. Requires Mg(2+) as cofactor.

It is found in the cytoplasm. It carries out the reaction Endonucleolytic cleavage to 5'-phosphomonoester.. Its function is as follows. Endonuclease that specifically degrades the RNA of RNA-DNA hybrids. The polypeptide is Ribonuclease H (Bartonella quintana (strain Toulouse) (Rochalimaea quintana)).